A 324-amino-acid chain; its full sequence is Envelope protein H3 (324 aa).

Residues 1–284 (MAAVKTPVIV…FTTPLISFFG (284 aa)) lie on the Virion surface side of the membrane. Residues 285 to 305 (LFDINVIGLIVILFIMFMLIF) traverse the membrane as a helical; Signal-anchor segment. Over 306–324 (NVKSKLLWFLTGTFVTAFI) the chain is Intravirion.

This sequence belongs to the orthopoxvirus OPG108 family. In terms of processing, does not contain disulfide bonds.

It is found in the virion membrane. In terms of biological role, envelope protein that binds to heparan sulfate on the cell surface and might provide virion attachment to target cell. The chain is Envelope protein H3 (OPG108) from Homo sapiens (Human).